Consider the following 237-residue polypeptide: Phosphoribosylaminoimidazole-succinocarboxamide synthase (237 aa).

This sequence belongs to the SAICAR synthetase family.

The enzyme catalyses 5-amino-1-(5-phospho-D-ribosyl)imidazole-4-carboxylate + L-aspartate + ATP = (2S)-2-[5-amino-1-(5-phospho-beta-D-ribosyl)imidazole-4-carboxamido]succinate + ADP + phosphate + 2 H(+). The protein operates within purine metabolism; IMP biosynthesis via de novo pathway; 5-amino-1-(5-phospho-D-ribosyl)imidazole-4-carboxamide from 5-amino-1-(5-phospho-D-ribosyl)imidazole-4-carboxylate: step 1/2. The protein is Phosphoribosylaminoimidazole-succinocarboxamide synthase of Enterobacter sp. (strain 638).